Reading from the N-terminus, the 494-residue chain is MSREQIIKDGGNILVTAGAGSGKTTILVSKIEADLKENKTHYSIAAVTFTNKAAKEIEGRLGYSSRGNFIGTNDGFVESEIIRPFIKDAFGNDYPDNFTAEYFDNQFASYDKGLQVLKYQNILGTYSNPKKNFKFQLALDILKKSLVARQYIFSKYFKIFIDEYQDSDKDMHNLFMYLKDQLKIKLFIVGDPKQSIYIWRGAEPENFNGLIENSTDFNKYHLTSNFRCCQDIQNYSNLFNEETRSLIKEKNEVQNVISIADDMPISDILLKLTEEKQVLNIEAELVILVRRRNQAIEIMKELNEEGFNFIFIPQTPLDRATPNATLLKEVIKYVKNDRYSIYDLAAEIVGNLSSREIKEIQKIINELLVPNINQVLINQVLINLFAKLEITLDTREITAFTEVMMTNEFDIAFDTNEYLHKIFTVHSAKGLEFNQVIITASDYNVHYNRDTNEHYVATTRAKDKLIVIMDNKKYSDYIETLMKELKIKNIIKSI.

The UvrD-like helicase ATP-binding domain maps to 1–229; the sequence is MSREQIIKDG…YHLTSNFRCC (229 aa). 17 to 24 provides a ligand contact to ATP; it reads AGAGSGKT.

It belongs to the helicase family. As to quaternary structure, homodimer. Interacts with GajA; 2 GajB dimers dock at opposite sides of the GajA complex to form a 4:4 GajA-GajB assembly (GajAB). GajAB interacts with Bacillus phage Phi3T Gad1 protein; this interaction forms a 4:4:8 GajAB-Gad1 complex and leads to GajAB inhibition.

Component of antiviral defense system Gabija type I, composed of GajA and GajB. Expression of Gabija type I in B.subtilis (strain BEST7003) confers resistance to phages phi105, phi29, rho14, SpBeta and SBSphiC. Expression of Gabija type I in E.coli B (strain ATCC 11303) confers resistance to phage T7. May be a helicase or contribute to GajA activation. The polypeptide is Gabija protein GajB (Bacillus cereus (strain VD045)).